We begin with the raw amino-acid sequence, 559 residues long: Aspartokinase 3, chloroplastic (559 aa).

The transit peptide at 1 to 85 (MAASMQFYGV…LNKTEKKLTC (85 aa)) directs the protein to the chloroplast. 3 residues coordinate ATP: Lys88, Gly91, and Ser120. Glu204 contacts substrate. 2 consecutive ACT domains span residues 402–480 (ITST…SIIS) and 481–559 (LIGN…AASS).

This sequence belongs to the aspartokinase family. In terms of tissue distribution, highly expressed in xylem of leaves and hypocotyls, stele of roots and in trichomes after bolting. Weak expression in veins and mesophyll cells of caulone leaves, inflorescence stems, sepals, petals and stigmata.

It is found in the plastid. The protein resides in the chloroplast. The enzyme catalyses L-aspartate + ATP = 4-phospho-L-aspartate + ADP. The protein operates within amino-acid biosynthesis; L-lysine biosynthesis via DAP pathway; (S)-tetrahydrodipicolinate from L-aspartate: step 1/4. Its pathway is amino-acid biosynthesis; L-methionine biosynthesis via de novo pathway; L-homoserine from L-aspartate: step 1/3. It participates in amino-acid biosynthesis; L-threonine biosynthesis; L-threonine from L-aspartate: step 1/5. Its activity is regulated as follows. Allosterically inhibited by lysine, but not by S-adenosyl-L-methionine (SAM). K(0.5) for lysine in the presence of physiological concentrations of substrates is 7.4 uM. No inhibition by threonine or leucine and no activation or inhibition by alanine, cysteine, isoleucine, serine, valine, methionine, glutamine, asparagine, glutamic acid or arginine. Involved in the first step of essential amino acids lysine, threonine, methionine and isoleucine synthesis via the aspartate-family pathway. This chain is Aspartokinase 3, chloroplastic (AK3), found in Arabidopsis thaliana (Mouse-ear cress).